Here is an 816-residue protein sequence, read N- to C-terminus: Leucine--tRNA ligase (816 aa).

A 'HIGH' region motif is present at residues 40 to 51 (PYPSGSGLHVGH). The 'KMSKS' region signature appears at 576-580 (KMSKS). Lys-579 lines the ATP pocket.

This sequence belongs to the class-I aminoacyl-tRNA synthetase family.

It is found in the cytoplasm. The enzyme catalyses tRNA(Leu) + L-leucine + ATP = L-leucyl-tRNA(Leu) + AMP + diphosphate. This Chlorobium phaeobacteroides (strain DSM 266 / SMG 266 / 2430) protein is Leucine--tRNA ligase.